The primary structure comprises 544 residues: Fructose dehydrogenase large subunit (544 aa).

FAD is bound at residue 14 to 30; it reads GAGICGSLLAHKLVRNG. Residue H478 is the Proton acceptor of the active site.

The protein belongs to the GMC oxidoreductase family. In terms of assembly, heterotrimer composed of FdhL, FdhS and FdhC. FAD is required as a cofactor.

It is found in the cell membrane. The catalysed reaction is keto-D-fructose + a ubiquinone = 5-dehydro-D-fructose + a ubiquinol. Its function is as follows. Catalytic subunit of fructose dehydrogenase, an enzyme that catalyzes the oxidation of D-fructose to produce 5-keto-D-fructose. The chain is Fructose dehydrogenase large subunit (fdhL) from Gluconobacter japonicus.